The chain runs to 113 residues: Outer membrane protein assembly factor BamE (113 aa).

A signal peptide spans 1–19; the sequence is MRCKTLTAAAAVLLMLTAG. Residue Cys-20 is the site of N-palmitoyl cysteine attachment. Cys-20 carries S-diacylglycerol cysteine lipidation.

This sequence belongs to the BamE family. Part of the Bam complex, which is composed of the outer membrane protein BamA, and four lipoproteins BamB, BamC, BamD and BamE.

The protein resides in the cell outer membrane. Its function is as follows. Part of the outer membrane protein assembly complex, which is involved in assembly and insertion of beta-barrel proteins into the outer membrane. The protein is Outer membrane protein assembly factor BamE of Escherichia coli O6:H1 (strain CFT073 / ATCC 700928 / UPEC).